The sequence spans 717 residues: P-loop NTPase domain-containing protein LPA1 homolog 2 (717 aa).

Disordered stretches follow at residues 235–259 and 532–629; these read KKLK…SSTT and HYSS…DTIS. Composition is skewed to polar residues over residues 243–259 and 532–545; these read VNSN…SSTT and HYSS…TSDG. The span at 559–582 shows a compositional bias: acidic residues; that stretch reads SDEDDEEGDDDFHEPDSDEDLSDN. Basic and acidic residues predominate over residues 583-602; that stretch reads NDERNRDEIGSVDEESTKSD.

May be not required for the accumulation of phytic acid in seeds. Phytic acid is the primary storage form of phosphorus in cereal grains and other plant seeds. The chain is P-loop NTPase domain-containing protein LPA1 homolog 2 from Arabidopsis thaliana (Mouse-ear cress).